A 462-amino-acid chain; its full sequence is UDP-N-acetylmuramate--L-alanine ligase (462 aa).

117–123 provides a ligand contact to ATP; sequence GTHGKTT.

Belongs to the MurCDEF family.

The protein resides in the cytoplasm. The catalysed reaction is UDP-N-acetyl-alpha-D-muramate + L-alanine + ATP = UDP-N-acetyl-alpha-D-muramoyl-L-alanine + ADP + phosphate + H(+). It participates in cell wall biogenesis; peptidoglycan biosynthesis. Functionally, cell wall formation. The sequence is that of UDP-N-acetylmuramate--L-alanine ligase from Streptomyces coelicolor (strain ATCC BAA-471 / A3(2) / M145).